The sequence spans 291 residues: D-alanyl-D-alanine carboxypeptidase DacB2 (291 aa).

Positions 1 to 22 (MRKLMTATAALCACAVTVSAGA) are cleaved as a signal peptide. The active-site Acyl-ester intermediate is Ser69. Residue Lys72 is the Proton acceptor of the active site. The active site involves Ser124.

Belongs to the peptidase S11 family.

It is found in the periplasm. The protein operates within cell wall biogenesis; peptidoglycan biosynthesis. With respect to regulation, inhibited by the beta-lactam antibiotic meropenem. Inhibited by the non-specific inhibitor phenylmethylsulfonyl fluoride (PMSF). Probably cleaves the terminal D-Ala-D-Ala dipeptide of the peptidoglycan stem peptide. Shows significant D,D-carboxypeptidase activity in vitro. Acts on the synthetic penta-peptide substrate Penta-DAP (L-Ala-gamma-D-Gln-DAP-D-Ala-D-Ala). Also shows weak activity on Penta-Lys (L-Ala-gamma-Glu-L-Lys-D-Ala-D-Ala). The catalytic domain binds weakly to peptidoglycan in vitro. Plays an important role in the maintenance of colony morphology and cell wall permeability and integrity. This Mycobacterium tuberculosis (strain ATCC 25618 / H37Rv) protein is D-alanyl-D-alanine carboxypeptidase DacB2.